The following is a 755-amino-acid chain: Photosystem I P700 chlorophyll a apoprotein A1 (755 aa).

8 consecutive transmembrane segments (helical) span residues 72–95 (IFSAHFGHLAVVFVWLSGMYYHGA), 158–181 (LLCTAIGGLVMAGLCLFAGWFHYH), 197–221 (LNHHLAGLLGLGSLAWAGHQIHVAI), 297–315 (QAHHHLAIAVLFIVAGHMY), 352–375 (WHAQLAINLAMVGSLSIIVAQHMY), 391–417 (ISLFTHHMWIGGIFIVGGAAHGAIYMV), 439–461 (AIISHLNWVCLFLGFHAFGFYVH), and 536–554 (FMVHHIHAMTIHITVLILL). Residues C578 and C587 each contribute to the [4Fe-4S] cluster site. A run of 2 helical transmembrane segments spans residues 594 to 615 (HVFLGLFWMYNAISIVIFHFSW) and 669 to 691 (LSAYGLLFLGAHFVWAFSLMFLF). H680 provides a ligand contact to chlorophyll a'. Chlorophyll a contacts are provided by M688 and Y696. Position 697 (W697) interacts with phylloquinone. Residues 729–749 (AVGVAHYLLGGIVTTWAFFLA) traverse the membrane as a helical segment.

The protein belongs to the PsaA/PsaB family. As to quaternary structure, the PsaA/B heterodimer binds the P700 chlorophyll special pair and subsequent electron acceptors. PSI consists of a core antenna complex that captures photons, and an electron transfer chain that converts photonic excitation into a charge separation. The cyanobacterial PSI reaction center is composed of one copy each of PsaA,B,C,D,E,F,I,J,K,L,M and X, and forms trimeric complexes. PSI electron transfer chain: 5 chlorophyll a, 1 chlorophyll a', 2 phylloquinones and 3 4Fe-4S clusters. PSI core antenna: 90 chlorophyll a, 22 carotenoids, 3 phospholipids and 1 galactolipid. P700 is a chlorophyll a/chlorophyll a' dimer, A0 is one or more chlorophyll a, A1 is one or both phylloquinones and FX is a shared 4Fe-4S iron-sulfur center. is required as a cofactor.

It localises to the cellular thylakoid membrane. The enzyme catalyses reduced [plastocyanin] + hnu + oxidized [2Fe-2S]-[ferredoxin] = oxidized [plastocyanin] + reduced [2Fe-2S]-[ferredoxin]. PsaA and PsaB bind P700, the primary electron donor of photosystem I (PSI), as well as the electron acceptors A0, A1 and FX. PSI is a plastocyanin/cytochrome c6-ferredoxin oxidoreductase, converting photonic excitation into a charge separation, which transfers an electron from the donor P700 chlorophyll pair to the spectroscopically characterized acceptors A0, A1, FX, FA and FB in turn. Oxidized P700 is reduced on the lumenal side of the thylakoid membrane by plastocyanin or cytochrome c6. In Synechococcus sp. (strain JA-3-3Ab) (Cyanobacteria bacterium Yellowstone A-Prime), this protein is Photosystem I P700 chlorophyll a apoprotein A1.